A 762-amino-acid chain; its full sequence is Endothelin-converting enzyme 1 (762 aa).

The Cytoplasmic portion of the chain corresponds to 1–60 (MGSLRPPQGLGLQWSSFFLGKKGPGLTVSLPLLASSLQVNFRSPRSGQRCWAARTSVEKR). The chain crosses the membrane as a helical; Signal-anchor for type II membrane protein span at residues 61-81 (LVVLVTLLAAGLVACLAALGI). At 82–762 (QYRTRTPPVC…MNPRHKCEVW (681 aa)) the chain is on the extracellular side. Residues 90-762 (VCLTEACVSV…MNPRHKCEVW (673 aa)) form the Peptidase M13 domain. Disulfide bonds link Cys91–Cys96, Cys114–Cys747, Cys122–Cys707, Cys177–Cys427, and Cys636–Cys759. N-linked (GlcNAc...) asparagine glycans are attached at residues Asn158, Asn179, Asn202, Asn262, Asn308, Asn354, Asn375, and Asn531. His599 is a Zn(2+) binding site. Glu600 is an active-site residue. His603 serves as a coordination point for Zn(2+). N-linked (GlcNAc...) asparagine glycans are attached at residues Asn624 and Asn643. Residue Glu659 coordinates Zn(2+). Asp663 (proton donor) is an active-site residue.

Belongs to the peptidase M13 family. As to quaternary structure, homodimer; disulfide-linked. Interacts with PPP1R16B. Interacts with TSPAN8; this interaction recruits the endothelin converting enzyme ECE1 to tetraspanin-enriched microdomains and positively modulates its enzymatic activity. Zn(2+) is required as a cofactor. All isoforms are expressed in aortic endothelial cells. Isoform A is also expressed in liver; isoform B in smooth muscle cells and fibroblasts; isoform C in aortic endothelial cells, smooth muscle cells, fibroblasts, liver and lung, and isoform D in smooth muscle cells.

The protein resides in the cell membrane. It catalyses the reaction Hydrolysis of the 21-Trp-|-Val-22 bond in big endothelin to form endothelin 1.. With respect to regulation, inhibited by phosphoramidon. Functionally, converts big endothelin-1 to endothelin-1. This Rattus norvegicus (Rat) protein is Endothelin-converting enzyme 1 (Ece1).